The chain runs to 526 residues: Seipin-2 (526 aa).

The tract at residues 33–77 (PIRSNSHQPSSLLRRRKSAHRRDLISSDIETEPSSSSDGFDVGEK) is disordered. The span at 58 to 70 (SSDIETEPSSSSD) shows a compositional bias: low complexity. A run of 4 helical transmembrane segments spans residues 195-215 (SLLT…FDPF), 224-243 (FLMA…MNPF), 258-278 (FGWG…LLVS), and 483-503 (LFVW…LVCC).

The protein belongs to the seipin family. As to expression, expressed in seeds, seedlings, leaves, stems and roots. Not detected in flowers.

The protein localises to the endoplasmic reticulum membrane. In terms of biological role, involved in lipid metabolism and lipid droplet (LD) morphology, number, and size. Supports the formation of small-sized LDs and modulates triacylglycerol accumulation. Induces probably a reorganization of the endoplasmic reticulum into LD-forming domains. The sequence is that of Seipin-2 from Arabidopsis thaliana (Mouse-ear cress).